A 336-amino-acid polypeptide reads, in one-letter code: 4-hydroxy-3-methylbut-2-enyl diphosphate reductase (336 aa).

Cys-37 provides a ligand contact to [4Fe-4S] cluster. His-66 and His-99 together coordinate (2E)-4-hydroxy-3-methylbut-2-enyl diphosphate. Residues His-66 and His-99 each coordinate dimethylallyl diphosphate. 2 residues coordinate isopentenyl diphosphate: His-66 and His-99. A [4Fe-4S] cluster-binding site is contributed by Cys-121. His-149 provides a ligand contact to (2E)-4-hydroxy-3-methylbut-2-enyl diphosphate. His-149 is a binding site for dimethylallyl diphosphate. His-149 is an isopentenyl diphosphate binding site. Glu-151 serves as the catalytic Proton donor. Thr-189 lines the (2E)-4-hydroxy-3-methylbut-2-enyl diphosphate pocket. [4Fe-4S] cluster is bound at residue Cys-219. Residues Ser-247, Ser-248, Asn-249, and Ser-292 each contribute to the (2E)-4-hydroxy-3-methylbut-2-enyl diphosphate site. Dimethylallyl diphosphate-binding residues include Ser-247, Ser-248, Asn-249, and Ser-292. Isopentenyl diphosphate is bound by residues Ser-247, Ser-248, Asn-249, and Ser-292.

The protein belongs to the IspH family. [4Fe-4S] cluster serves as cofactor.

It carries out the reaction isopentenyl diphosphate + 2 oxidized [2Fe-2S]-[ferredoxin] + H2O = (2E)-4-hydroxy-3-methylbut-2-enyl diphosphate + 2 reduced [2Fe-2S]-[ferredoxin] + 2 H(+). The enzyme catalyses dimethylallyl diphosphate + 2 oxidized [2Fe-2S]-[ferredoxin] + H2O = (2E)-4-hydroxy-3-methylbut-2-enyl diphosphate + 2 reduced [2Fe-2S]-[ferredoxin] + 2 H(+). Its pathway is isoprenoid biosynthesis; dimethylallyl diphosphate biosynthesis; dimethylallyl diphosphate from (2E)-4-hydroxy-3-methylbutenyl diphosphate: step 1/1. It functions in the pathway isoprenoid biosynthesis; isopentenyl diphosphate biosynthesis via DXP pathway; isopentenyl diphosphate from 1-deoxy-D-xylulose 5-phosphate: step 6/6. Functionally, catalyzes the conversion of 1-hydroxy-2-methyl-2-(E)-butenyl 4-diphosphate (HMBPP) into a mixture of isopentenyl diphosphate (IPP) and dimethylallyl diphosphate (DMAPP). Acts in the terminal step of the DOXP/MEP pathway for isoprenoid precursor biosynthesis. The sequence is that of 4-hydroxy-3-methylbut-2-enyl diphosphate reductase from Rhodococcus jostii (strain RHA1).